A 1522-amino-acid chain; its full sequence is Sodium channel protein 1 brain (1522 aa).

Over 1–50 (MDEKYTAKNRDKTFVVIEKRFKKNIIHRFSAKRSLFLFTPRNPIRRLAVC) the chain is Cytoplasmic. One copy of the I repeat lies at 41–342 (RNPIRRLAVC…VATAYELEVK (302 aa)). A helical transmembrane segment spans residues 51-70 (IATNVCFDYFLMFTIMINCV). The Extracellular portion of the chain corresponds to 71–77 (FLAMPDI). Residues 78-99 (SEFAEYIFLGIYTMEMAIKLVA) form a helical membrane-spanning segment. Residues 100-112 (GGFFIDKYTYLRD) are Cytoplasmic-facing. A helical membrane pass occupies residues 113-134 (AWNCLDFTVIMISYITLLLQTI). The Extracellular portion of the chain corresponds to 135–143 (NDKVISDIT). The chain crosses the membrane as a helical; Voltage-sensor span at residues 144–167 (GLRTFRVLRALRTLSIIPGLKTMV). Residues 168–179 (NALLRALRMLIS) lie on the Cytoplasmic side of the membrane. Residues 180–201 (VLILILFCLWIFSQAGVQLFGG) traverse the membrane as a helical segment. Residues 202–278 (ALRHKCVLQI…PNYGYTNFDS (77 aa)) are Extracellular-facing. A disulfide bridge links cysteine 207 with cysteine 255. Asparagine 248 and asparagine 258 each carry an N-linked (GlcNAc...) asparagine glycan. Positions 279–303 (IGWSMLISFQLLTQDYWEDVYNKVI) form an intramembrane region, pore-forming. At 304–308 (RAHSP) the chain is on the extracellular side. Residues 309–331 (WTVIYFIVINFFGSLYLMNLMLA) form a helical membrane-spanning segment. The Cytoplasmic segment spans residues 332–406 (VVATAYELEV…WLRVQSFAHC (75 aa)). One copy of the II repeat lies at 393–647 (CYNPWLRVQS…EQEVEVSSFA (255 aa)). A helical transmembrane segment spans residues 407 to 426 (IITDSFTEVFIIFIIVLNTV). At 427-442 (FLAMEHHGMSMELKNV) the chain is on the extracellular side. Residues 443 to 464 (LKVANYVFTTVFVLEAILKLLA) traverse the membrane as a helical segment. Over 465-472 (FNKQYFKS) the chain is Cytoplasmic. The helical transmembrane segment at 473–491 (GWNICDLVVVVASLIDLGV) threads the bilayer. The Extracellular segment spans residues 492-498 (EGLKGVS). The helical; Voltage-sensor transmembrane segment at 499–522 (VFRSFRLLRVFHLAQSWTTMRLLL) threads the bilayer. The Cytoplasmic segment spans residues 523–531 (CIILNTLGS). Residues 532–553 (LGYLTIILIIVIYIFAVTGLQL) traverse the membrane as a helical segment. The Extracellular segment spans residues 554–575 (FHTEYTPDKFRGEPVPRWNFND). The pore-forming intramembrane region spans 576–596 (FLHSFMMVFRILCGEWIEPMY). The Extracellular portion of the chain corresponds to 597 to 607 (DCMRACNGLCF). A disulfide bridge connects residues cysteine 598 and cysteine 606. The helical transmembrane segment at 608-628 (LIFIPVTVFGKTLFFLFIGLV) threads the bilayer. At 629-777 (LGAFGSDTVE…WNNFRRQLMM (149 aa)) the chain is on the cytoplasmic side. Residues 770 to 1074 (NFRRQLMMVC…QNYYNTLKKL (305 aa)) form an III repeat. The helical transmembrane segment at 778-797 (VCENKYFETGVLVIIFASSI) threads the bilayer. Residues 798-815 (LLAFEDIYLNEKPRLKLA) are Extracellular-facing. The helical transmembrane segment at 816–837 (IFYLDITFCLLFFLEMVLKLVA) threads the bilayer. Residues 838–846 (LGFVHYYTH) are Cytoplasmic-facing. The chain crosses the membrane as a helical span at residues 847–868 (FWTILDFTIVIITVISLAASGL). Topologically, residues 869 to 874 (GMEQIT) are extracellular. A helical; Voltage-sensor transmembrane segment spans residues 875 to 898 (AFRSLRTLRALRPLRAVSRWQGMK). Residues 899–915 (IIVNALMLSIPSIFNVL) are Cytoplasmic-facing. A helical membrane pass occupies residues 916-937 (LVCVVFWLIFAIMGVQLFAGKF). Residues 938–976 (YKCVNETNMRIPPTEVANKIECYNKNYTWVNSNVNFDNV) lie on the Extracellular side of the membrane. N-linked (GlcNAc...) asparagine glycans are attached at residues asparagine 942 and asparagine 963. The segment at residues 977 to 998 (GGAFLALFQVATFEGWMEIMAD) is an intramembrane region (pore-forming). Residues 999–1009 (AVDVTEVDEQP) lie on the Extracellular side of the membrane. A helical transmembrane segment spans residues 1010-1022 (KFEATVYYYFYFV). The Cytoplasmic portion of the chain corresponds to 1023 to 1100 (LFIIFGSFFV…QAVVYDLVMS (78 aa)). Threonine 1076 bears the Phosphothreonine; by PKC mark. The IV repeat unit spans residues 1083–1386 (VKRPKNKCQA…WEQYDPLATQ (304 aa)). Residues 1101–1120 (NQFEIFITTIIITNMIFMAF) form a helical membrane-spanning segment. Over 1121 to 1132 (EHYNQSEVVTEV) the chain is Extracellular. Residue asparagine 1124 is glycosylated (N-linked (GlcNAc...) asparagine). A helical membrane pass occupies residues 1133 to 1154 (LATANIAFTILYAVEAIIKIIG). The Cytoplasmic segment spans residues 1155 to 1162 (LRIHYLRN). A helical transmembrane segment spans residues 1163 to 1184 (LWNVFDFLVVTLSVMDAFLNDI). At 1185-1194 (FGDGIFMNPS) the chain is on the extracellular side. A helical; Voltage-sensor membrane pass occupies residues 1195-1218 (LLRVARMFRIGRIIRLIKWAKGMR). Topologically, residues 1219–1236 (KLLFALVISLPALFNIGA) are cytoplasmic. The chain crosses the membrane as a helical span at residues 1237-1258 (LLMLVMFIYTIIGMSSFGQIKL). Topologically, residues 1259-1270 (SGALNDQVNFQT) are extracellular. An intramembrane region (pore-forming) is located at residues 1271 to 1293 (FGKTFLLLVRLATSAGWNDILGP). Topologically, residues 1294 to 1323 (LLIQPPNCDPNYITTSTGEKIKVVNGDCGM) are extracellular. A helical transmembrane segment spans residues 1324–1346 (PWLAISYMVSYIIIVFMIVFNMY). Topologically, residues 1347–1522 (IAVILENFNQ…FIISAPETAV (176 aa)) are cytoplasmic.

This sequence belongs to the sodium channel (TC 1.A.1.10) family.

It is found in the cell membrane. Functionally, mediates the voltage-dependent sodium ion permeability of excitable membranes. Assuming opened or closed conformations in response to the voltage difference across the membrane, the protein forms a sodium-selective channel through which Na(+) ions may pass in accordance with their electrochemical gradient. The sequence is that of Sodium channel protein 1 brain from Heterololigo bleekeri (Spear squid).